The following is a 578-amino-acid chain: NADPH oxidase 4 (578 aa).

The Cytoplasmic segment spans residues 1-16 (MAVSWRSWLANEGVKH). The chain crosses the membrane as a helical span at residues 17 to 37 (LCLFIWLSMNVLLFWKTFLLY). Residues 38 to 62 (NQGPEYHYLHQMLGLGLCLSRASAS) are Extracellular-facing. The Ferric oxidoreductase domain maps to 58-303 (RASASVLNLN…YCAERLYRYI (246 aa)). The helical transmembrane segment at 63-83 (VLNLNCSLILLPMCRTLLAYL) threads the bilayer. Topologically, residues 84-103 (RGSQKVPSRRTRRLLDKSRT) are cytoplasmic. A helical membrane pass occupies residues 104–124 (FHITCGVTICIFSGVHVAAHL). The Extracellular portion of the chain corresponds to 125-154 (VNALNFSVNYSEDFVELNAARYRDEDPRKL). An N-linked (GlcNAc...) asparagine glycan is attached at Asn133. Residues 155-175 (LFTTVPGLTGVCMVVVLFLMI) form a helical membrane-spanning segment. Topologically, residues 176–188 (TASTYAIRVSNYD) are cytoplasmic. Residues 189 to 209 (IFWYTHNLFFVFYMLLTLHVS) form a helical membrane-spanning segment. Residues 210 to 424 (GGLLKYQTNL…SPFEESLNYE (215 aa)) lie on the Extracellular side of the membrane. An E-loop; essential for H2O2 generating catalytic activity region spans residues 218 to 273 (NLDTHPPGCISLNRTSSQNISLPEYFSEHFHEPFPEGFSKPAEFTQHKFVKICMEE). Asn230 carries N-linked (GlcNAc...) asparagine glycosylation. Residues 248–575 (HEPFPEGFSK…YGTRFEYNKE (328 aa)) form a mediates interaction with TLR4 region. One can recognise an FAD-binding FR-type domain in the interval 304–419 (RSNKPVTIIS…DGPFGSPFEE (116 aa)). The helical transmembrane segment at 425–445 (VSLCVAGGIGVTPFASILNTL) threads the bilayer. Residues 446–578 (LDDWKPYKLR…RFEYNKESFS (133 aa)) are Cytoplasmic-facing.

Interacts with protein disulfide isomerase. Interacts with, relocalizes and stabilizes CYBA/p22phox. Interacts with TLR4. Interacts with PPP1R15A. Interacts with LRRC8A; this interaction prevents the ubiquitin-mediated degradation of LRRC8A. Heme is required as a cofactor. In terms of processing, deubiquitinated by USP19. N-glycosylated and glycosylation is required for its proper function. Post-translationally, N-glycosylated. Expressed by distal tubular cells in kidney cortex and in endothelial cells (at protein level). Widely expressed. Strongly expressed in kidney and to a lower extent in heart, adipocytes, hepatoma, endothelial cells, skeletal muscle, brain, several brain tumor cell lines and airway epithelial cells.

It is found in the cytoplasm. The protein resides in the endoplasmic reticulum membrane. Its subcellular location is the cell membrane. It localises to the cell junction. The protein localises to the focal adhesion. It is found in the nucleus. The protein resides in the nucleolus. Its subcellular location is the perinuclear region. It carries out the reaction NADPH + 2 O2 = 2 superoxide + NADP(+) + H(+). It catalyses the reaction NADPH + O2 + H(+) = H2O2 + NADP(+). With respect to regulation, inhibited by plumbagin. Activated by phorbol 12-myristate 13-acetate (PMA). Activated by insulin. Inhibited by diphenylene iodonium. Functionally, NADPH oxidase that catalyzes predominantly the reduction of oxygen to H2O2. Can also catalyze to a smaller extent, the reduction of oxygen to superoxide. May function as an oxygen sensor regulating the KCNK3/TASK-1 potassium channel and HIF1A activity. May regulate insulin signaling cascade. May play a role in apoptosis, bone resorption and lipolysaccharide-mediated activation of NFKB. May produce superoxide in the nucleus and play a role in regulating gene expression upon cell stimulation. Promotes ferroptosis, reactive oxygen species production and reduced glutathione (GSH) levels by activating NLRP3 inflammasome activation and cytokine release. NADPH oxidase that catalyzes the generation of superoxide from molecular oxygen utilizing NADPH as an electron donor. Involved in redox signaling in vascular cells. Modulates the nuclear activation of ERK1/2 and the ELK1 transcription factor, and is capable of inducing nuclear DNA damage. Its function is as follows. Lacks superoxide-generating NADPH oxidase activity. The protein is NADPH oxidase 4 (NOX4) of Homo sapiens (Human).